The sequence spans 276 residues: NH(3)-dependent NAD(+) synthetase (276 aa).

ATP is bound at residue 43–50; it reads GISGGVDS. Asp49 is a binding site for Mg(2+). Position 146 (Arg146) interacts with deamido-NAD(+). An ATP-binding site is contributed by Thr166. Glu171 is a binding site for Mg(2+). Deamido-NAD(+) is bound by residues Lys179 and Asp186. Residues Lys195 and Thr217 each contribute to the ATP site. Position 266–267 (266–267) interacts with deamido-NAD(+); that stretch reads HK.

Belongs to the NAD synthetase family. As to quaternary structure, homodimer.

It carries out the reaction deamido-NAD(+) + NH4(+) + ATP = AMP + diphosphate + NAD(+) + H(+). It participates in cofactor biosynthesis; NAD(+) biosynthesis; NAD(+) from deamido-NAD(+) (ammonia route): step 1/1. Functionally, catalyzes the ATP-dependent amidation of deamido-NAD to form NAD. Uses ammonia as a nitrogen source. This is NH(3)-dependent NAD(+) synthetase from Aliivibrio fischeri (strain MJ11) (Vibrio fischeri).